A 495-amino-acid polypeptide reads, in one-letter code: RNA-binding KH domain-containing protein PEPPER (495 aa).

KH domains lie at 73–140 (DCVF…MDAV), 165–234 (FSSV…LEAI), and 340–403 (QVSQ…EQLI). Positions 474 to 495 (GQTYGSEYRPASDVGGYSSYNL) are disordered.

As to quaternary structure, interacts with HUA1 and HEN4. As to expression, detected in roots, shoots, leaves, flowers and fruits.

The protein resides in the nucleus. In terms of biological role, regulates vegetative and gynoecium development. In concert with HUA2, antagonizes FLK by positively regulating FLC probably at transcriptional and post-transcriptional levels, and thus acts as a negative regulator of flowering. The polypeptide is RNA-binding KH domain-containing protein PEPPER (Arabidopsis thaliana (Mouse-ear cress)).